The chain runs to 705 residues: Elongation factor G (705 aa).

The 283-residue stretch at 8–290 (ERYRNFGIMA…GVVHLLPSPA (283 aa)) folds into the tr-type G domain. Residues 17-24 (AHIDAGKT), 88-92 (DTPGH), and 142-145 (NKMD) each bind GTP. Positions 290-309 (ADRPPVQGIDENEKEDTRDA) are disordered.

Belongs to the TRAFAC class translation factor GTPase superfamily. Classic translation factor GTPase family. EF-G/EF-2 subfamily.

It is found in the cytoplasm. Its function is as follows. Catalyzes the GTP-dependent ribosomal translocation step during translation elongation. During this step, the ribosome changes from the pre-translocational (PRE) to the post-translocational (POST) state as the newly formed A-site-bound peptidyl-tRNA and P-site-bound deacylated tRNA move to the P and E sites, respectively. Catalyzes the coordinated movement of the two tRNA molecules, the mRNA and conformational changes in the ribosome. This chain is Elongation factor G, found in Xanthomonas campestris pv. campestris (strain 8004).